The following is a 193-amino-acid chain: MIDYILLIISTALINNFVLVKFLGLCPFMGVSKKIETAIGMGLATMFVLTVASLCAYLVERYLLTPLHANFLRTLIFILVIAVVVQFTEMVIHKTSPTLYRLLGIFLPLITTNCAVLGVALLNINLAHNLTQSVIYGFSASLGFSLVLVLFAALRERLTAADIPLPFRGASIALITAGLMSLAFMGFSGLVRV.

Transmembrane regions (helical) follow at residues 5-25 (ILLIISTALINNFVLVKFLGL), 39-59 (IGMGLATMFVLTVASLCAYLV), 72-92 (LRTLIFILVIAVVVQFTEMVI), 102-122 (LLGIFLPLITTNCAVLGVALL), 134-154 (VIYGFSASLGFSLVLVLFAAL), and 171-191 (SIALITAGLMSLAFMGFSGLV).

Belongs to the NqrDE/RnfAE family. As to quaternary structure, the complex is composed of six subunits: RnfA, RnfB, RnfC, RnfD, RnfE and RnfG.

It localises to the cell inner membrane. Functionally, part of a membrane-bound complex that couples electron transfer with translocation of ions across the membrane. In Histophilus somni (strain 2336) (Haemophilus somnus), this protein is Ion-translocating oxidoreductase complex subunit A.